The following is a 452-amino-acid chain: Pup--protein ligase (452 aa).

Position 9 (Glu9) interacts with Mg(2+). Residue Arg53 participates in ATP binding. Tyr55 contacts Mg(2+). The active-site Proton acceptor is Asp57. Position 63 (Glu63) interacts with Mg(2+). The ATP site is built by Thr66 and Trp419.

It belongs to the Pup ligase/Pup deamidase family. Pup-conjugating enzyme subfamily.

It catalyses the reaction ATP + [prokaryotic ubiquitin-like protein]-L-glutamate + [protein]-L-lysine = ADP + phosphate + N(6)-([prokaryotic ubiquitin-like protein]-gamma-L-glutamyl)-[protein]-L-lysine.. The protein operates within protein degradation; proteasomal Pup-dependent pathway. Its pathway is protein modification; protein pupylation. Its function is as follows. Catalyzes the covalent attachment of the prokaryotic ubiquitin-like protein modifier Pup to the proteasomal substrate proteins, thereby targeting them for proteasomal degradation. This tagging system is termed pupylation. The ligation reaction involves the side-chain carboxylate of the C-terminal glutamate of Pup and the side-chain amino group of a substrate lysine. This Frankia alni (strain DSM 45986 / CECT 9034 / ACN14a) protein is Pup--protein ligase.